Consider the following 633-residue polypeptide: tRNA uridine 5-carboxymethylaminomethyl modification enzyme MnmG (633 aa).

Residues 15-20 (GAGHAG), I127, and S182 contribute to the FAD site. 276 to 290 (GPRYCPSIEDKIVRF) is an NAD(+) binding site. Q373 provides a ligand contact to FAD.

Belongs to the MnmG family. In terms of assembly, homodimer. Heterotetramer of two MnmE and two MnmG subunits. Requires FAD as cofactor.

The protein resides in the cytoplasm. In terms of biological role, NAD-binding protein involved in the addition of a carboxymethylaminomethyl (cmnm) group at the wobble position (U34) of certain tRNAs, forming tRNA-cmnm(5)s(2)U34. In Streptococcus agalactiae serotype Ia (strain ATCC 27591 / A909 / CDC SS700), this protein is tRNA uridine 5-carboxymethylaminomethyl modification enzyme MnmG.